A 453-amino-acid polypeptide reads, in one-letter code: Maltotriose-binding protein (453 aa).

Positions 1 to 29 are cleaved as a signal peptide; the sequence is MKRGIYAVLLVGVLIFSVVASGCIGGTQT. Residues 27–65 show a composition bias toward low complexity; it reads TQTQTETQTPEKTQTPTTTQPSPTTTTSPTQTTSQTPTE. The tract at residues 27 to 73 is disordered; that stretch reads TQTQTETQTPEKTQTPTTTQPSPTTTTSPTQTTSQTPTETETHTQEA.

Belongs to the bacterial solute-binding protein 1 family.

Functionally, involved in an abc transport system for maltotriose. The protein is Maltotriose-binding protein (malE) of Pyrococcus abyssi (strain GE5 / Orsay).